We begin with the raw amino-acid sequence, 294 residues long: Putative immediate early glycoprotein (294 aa).

An N-terminal signal peptide occupies residues 1–21 (MKKLTMESLLVYTFVMGVCFT). The helical transmembrane segment at 262 to 282 (LFFLAGGAFTMLLLLCCLSMI) threads the bilayer.

This sequence belongs to the herpesviridae immediate early glycoprotein family.

The protein resides in the host membrane. The chain is Putative immediate early glycoprotein (U18) from Homo sapiens (Human).